The primary structure comprises 304 residues: Aspartate carbamoyltransferase catalytic subunit (304 aa).

Carbamoyl phosphate-binding residues include Arg-57 and Thr-58. Lys-86 lines the L-aspartate pocket. Carbamoyl phosphate contacts are provided by Arg-107, His-135, and Gln-138. Residues Arg-168 and Arg-229 each coordinate L-aspartate. 2 residues coordinate carbamoyl phosphate: Leu-266 and Pro-267.

Belongs to the aspartate/ornithine carbamoyltransferase superfamily. ATCase family. In terms of assembly, heterooligomer of catalytic and regulatory chains.

The catalysed reaction is carbamoyl phosphate + L-aspartate = N-carbamoyl-L-aspartate + phosphate + H(+). It functions in the pathway pyrimidine metabolism; UMP biosynthesis via de novo pathway; (S)-dihydroorotate from bicarbonate: step 2/3. Catalyzes the condensation of carbamoyl phosphate and aspartate to form carbamoyl aspartate and inorganic phosphate, the committed step in the de novo pyrimidine nucleotide biosynthesis pathway. The chain is Aspartate carbamoyltransferase catalytic subunit from Methanosphaera stadtmanae (strain ATCC 43021 / DSM 3091 / JCM 11832 / MCB-3).